A 199-amino-acid chain; its full sequence is Peroxiredoxin-1 (199 aa).

Residues 6 to 165 form the Thioredoxin domain; the sequence is AFIGKPAPDF…TLRLVQAFQF (160 aa). The active-site Cysteine sulfenic acid (-SOH) intermediate is Cys-52.

It belongs to the peroxiredoxin family. AhpC/Prx1 subfamily. As to quaternary structure, homodimer; disulfide-linked, upon oxidation. 5 homodimers assemble to form a ring-like decamer. Interacts with GDPD5; forms a mixed-disulfide with GDPD5. Interacts with SESN1 and SESN2. In terms of processing, the enzyme can be inactivated by further oxidation of the cysteine sulfenic acid (C(P)-SOH) to sulphinic acid (C(P)-SO2H) instead of its condensation to a disulfide bond. It can be reactivated by forming a transient disulfide bond with sulfiredoxin SRXN1, which reduces the cysteine sulfinic acid in an ATP- and Mg-dependent manner.

Its subcellular location is the cytoplasm. It carries out the reaction a hydroperoxide + [thioredoxin]-dithiol = an alcohol + [thioredoxin]-disulfide + H2O. Functionally, thiol-specific peroxidase that catalyzes the reduction of hydrogen peroxide and organic hydroperoxides to water and alcohols, respectively. Plays a role in cell protection against oxidative stress by detoxifying peroxides and as sensor of hydrogen peroxide-mediated signaling events. Might participate in the signaling cascades of growth factors and tumor necrosis factor-alpha by regulating the intracellular concentrations of H(2)O(2). Reduces an intramolecular disulfide bond in GDPD5 that gates the ability to GDPD5 to drive postmitotic motor neuron differentiation. This chain is Peroxiredoxin-1 (PRDX1), found in Gallus gallus (Chicken).